Reading from the N-terminus, the 531-residue chain is T-complex protein 1 subunit zeta-2 (531 aa).

Belongs to the TCP-1 chaperonin family. In terms of assembly, component of the chaperonin-containing T-complex (TRiC), a heterooligomeric complex of about 850 to 900 kDa that forms two stacked rings, 12 to 16 nm in diameter.

Its subcellular location is the cytoplasm. In terms of biological role, component of the chaperonin-containing T-complex (TRiC), a molecular chaperone complex that assists the folding of proteins upon ATP hydrolysis. The protein is T-complex protein 1 subunit zeta-2 (CCT6B) of Bos taurus (Bovine).